Here is a 192-residue protein sequence, read N- to C-terminus: Fe/S biogenesis protein NfuA (192 aa).

Positions 149 and 152 each coordinate [4Fe-4S] cluster.

This sequence belongs to the NfuA family. Homodimer. The cofactor is [4Fe-4S] cluster.

Involved in iron-sulfur cluster biogenesis. Binds a 4Fe-4S cluster, can transfer this cluster to apoproteins, and thereby intervenes in the maturation of Fe/S proteins. Could also act as a scaffold/chaperone for damaged Fe/S proteins. The chain is Fe/S biogenesis protein NfuA from Shewanella sp. (strain MR-7).